Reading from the N-terminus, the 811-residue chain is Myb-like DNA-binding protein BAS1 (811 aa).

Positions 34–110 constitute a Myb-like domain; the sequence is HRKNGRNSWS…DVRKRWTGSL (77 aa). 2 consecutive HTH myb-type domains span residues 111–165 and 166–218; these read DPNL…GPGS and KGRL…TMVV. 2 DNA-binding regions (H-T-H motif) span residues 138–161 and 191–214; these read WLSI…IEVL and WRKI…RKII. Basic and acidic residues predominate over residues 237 to 264; sequence DMTDGKLRQHPIADSDIRSDSTPNKEEQ. 4 disordered regions span residues 237-320, 348-379, 535-713, and 782-811; these read DMTD…SAPP, SQMN…DEHM, ATSH…LRDE, and LHNE…LNPS. Over residues 265–275 the composition is skewed to low complexity; the sequence is LQLSQQNNPSL. Positions 282–298 are enriched in basic and acidic residues; the sequence is NVKENESSKLPRLKDND. 3 stretches are compositionally biased toward polar residues: residues 348 to 366, 535 to 613, and 653 to 664; these read SQMN…QTSL, ATSH…TSGS, and LNPSPNSVRSNG. Basic and acidic residues predominate over residues 782 to 794; the sequence is LHNEAKKTSEHDM.

In terms of assembly, monomer.

The protein localises to the nucleus. Functionally, activates HIS4 transcription only in combination with PHO2/BAS2. BAS1 is also involved in the regulation of the purine biosynthesis pathway. This chain is Myb-like DNA-binding protein BAS1 (BAS1), found in Saccharomyces cerevisiae (strain ATCC 204508 / S288c) (Baker's yeast).